The primary structure comprises 335 residues: Holliday junction branch migration complex subunit RuvB (335 aa).

The tract at residues 1-181 (MDRIVEIEKY…FGMQFRLEFY (181 aa)) is large ATPase domain (RuvB-L). ATP is bound by residues Leu20, Arg21, Gly62, Lys65, Thr66, Thr67, 128–130 (EDY), Arg171, Tyr181, and Arg218. Residue Thr66 participates in Mg(2+) binding. Positions 182 to 252 (KDSELALILQ…RANEALNSLG (71 aa)) are small ATPAse domain (RuvB-S). The tract at residues 255–335 (ELGFDAMDLR…LNYEKTLFEE (81 aa)) is head domain (RuvB-H). 2 residues coordinate DNA: Arg309 and Arg314.

The protein belongs to the RuvB family. As to quaternary structure, homohexamer. Forms an RuvA(8)-RuvB(12)-Holliday junction (HJ) complex. HJ DNA is sandwiched between 2 RuvA tetramers; dsDNA enters through RuvA and exits via RuvB. An RuvB hexamer assembles on each DNA strand where it exits the tetramer. Each RuvB hexamer is contacted by two RuvA subunits (via domain III) on 2 adjacent RuvB subunits; this complex drives branch migration. In the full resolvosome a probable DNA-RuvA(4)-RuvB(12)-RuvC(2) complex forms which resolves the HJ.

The protein resides in the cytoplasm. It catalyses the reaction ATP + H2O = ADP + phosphate + H(+). The RuvA-RuvB-RuvC complex processes Holliday junction (HJ) DNA during genetic recombination and DNA repair, while the RuvA-RuvB complex plays an important role in the rescue of blocked DNA replication forks via replication fork reversal (RFR). RuvA specifically binds to HJ cruciform DNA, conferring on it an open structure. The RuvB hexamer acts as an ATP-dependent pump, pulling dsDNA into and through the RuvAB complex. RuvB forms 2 homohexamers on either side of HJ DNA bound by 1 or 2 RuvA tetramers; 4 subunits per hexamer contact DNA at a time. Coordinated motions by a converter formed by DNA-disengaged RuvB subunits stimulates ATP hydrolysis and nucleotide exchange. Immobilization of the converter enables RuvB to convert the ATP-contained energy into a lever motion, pulling 2 nucleotides of DNA out of the RuvA tetramer per ATP hydrolyzed, thus driving DNA branch migration. The RuvB motors rotate together with the DNA substrate, which together with the progressing nucleotide cycle form the mechanistic basis for DNA recombination by continuous HJ branch migration. Branch migration allows RuvC to scan DNA until it finds its consensus sequence, where it cleaves and resolves cruciform DNA. This is Holliday junction branch migration complex subunit RuvB from Campylobacter jejuni subsp. doylei (strain ATCC BAA-1458 / RM4099 / 269.97).